Consider the following 267-residue polypeptide: Eukaryotic translation initiation factor 3 subunit J (267 aa).

Disordered stretches follow at residues 1–118 (MAPS…DLKH) and 221–241 (MREE…KTKV). Residues 28–46 (DEEEEDVLDSWDAAEDSEV) show a composition bias toward acidic residues. A coiled-coil region spans residues 44–99 (SEVEREKAAKAAAAAAKAEAEAAAKKKSKAQRIEERKQERKKLAEANESDEDSEED). A compositionally biased stretch (basic and acidic residues) spans 74–88 (QRIEERKQERKKLAE). Residues 90-100 (NESDEDSEEDE) are compositionally biased toward acidic residues. Composition is skewed to basic and acidic residues over residues 108-118 (RRTEKEGDLKH) and 221-231 (MREERAADKGN).

Belongs to the eIF-3 subunit J family. Component of the eukaryotic translation initiation factor 3 (eIF-3) complex.

The protein localises to the cytoplasm. Functionally, component of the eukaryotic translation initiation factor 3 (eIF-3) complex, which is involved in protein synthesis of a specialized repertoire of mRNAs and, together with other initiation factors, stimulates binding of mRNA and methionyl-tRNAi to the 40S ribosome. The eIF-3 complex specifically targets and initiates translation of a subset of mRNAs involved in cell proliferation. In Aspergillus fumigatus (strain CBS 144.89 / FGSC A1163 / CEA10) (Neosartorya fumigata), this protein is Eukaryotic translation initiation factor 3 subunit J (hcr1).